A 150-amino-acid polypeptide reads, in one-letter code: Deoxyuridine 5'-triphosphate nucleotidohydrolase (150 aa).

Residues 65–67, N78, and 82–84 each bind substrate; these read RSG and TID. The disordered stretch occupies residues 130 to 150; the sequence is LSDTERGEGGFGHTGVASKAE.

The protein belongs to the dUTPase family. Mg(2+) is required as a cofactor.

The enzyme catalyses dUTP + H2O = dUMP + diphosphate + H(+). It participates in pyrimidine metabolism; dUMP biosynthesis; dUMP from dCTP (dUTP route): step 2/2. This enzyme is involved in nucleotide metabolism: it produces dUMP, the immediate precursor of thymidine nucleotides and it decreases the intracellular concentration of dUTP so that uracil cannot be incorporated into DNA. This Chlorobaculum parvum (strain DSM 263 / NCIMB 8327) (Chlorobium vibrioforme subsp. thiosulfatophilum) protein is Deoxyuridine 5'-triphosphate nucleotidohydrolase.